We begin with the raw amino-acid sequence, 156 residues long: Small ribosomal subunit protein uS7 (156 aa).

It belongs to the universal ribosomal protein uS7 family. As to quaternary structure, part of the 30S ribosomal subunit. Contacts proteins S9 and S11.

Functionally, one of the primary rRNA binding proteins, it binds directly to 16S rRNA where it nucleates assembly of the head domain of the 30S subunit. Is located at the subunit interface close to the decoding center, probably blocks exit of the E-site tRNA. This chain is Small ribosomal subunit protein uS7, found in Prochlorococcus marinus (strain MIT 9312).